The following is a 170-amino-acid chain: uncharacterized protein (170 aa).

Positions 25–151 (PALSPHLVVD…FGHHWSLGQP (127 aa)) constitute a VOC domain.

This is an uncharacterized protein from Mycobacterium tuberculosis (strain CDC 1551 / Oshkosh).